Reading from the N-terminus, the 304-residue chain is Phosphoribosylaminoimidazole-succinocarboxamide synthase (304 aa).

The protein belongs to the SAICAR synthetase family.

The catalysed reaction is 5-amino-1-(5-phospho-D-ribosyl)imidazole-4-carboxylate + L-aspartate + ATP = (2S)-2-[5-amino-1-(5-phospho-beta-D-ribosyl)imidazole-4-carboxamido]succinate + ADP + phosphate + 2 H(+). The protein operates within purine metabolism; IMP biosynthesis via de novo pathway; 5-amino-1-(5-phospho-D-ribosyl)imidazole-4-carboxamide from 5-amino-1-(5-phospho-D-ribosyl)imidazole-4-carboxylate: step 1/2. The chain is Phosphoribosylaminoimidazole-succinocarboxamide synthase from Corynebacterium efficiens (strain DSM 44549 / YS-314 / AJ 12310 / JCM 11189 / NBRC 100395).